The chain runs to 1155 residues: DNA-directed RNA polymerase subunit beta (1155 aa).

This sequence belongs to the RNA polymerase beta chain family. The RNAP catalytic core consists of 2 alpha, 1 beta, 1 beta' and 1 omega subunit. When a sigma factor is associated with the core the holoenzyme is formed, which can initiate transcription.

The catalysed reaction is RNA(n) + a ribonucleoside 5'-triphosphate = RNA(n+1) + diphosphate. Functionally, DNA-dependent RNA polymerase catalyzes the transcription of DNA into RNA using the four ribonucleoside triphosphates as substrates. The protein is DNA-directed RNA polymerase subunit beta of Borrelia hermsii (strain HS1 / DAH).